The sequence spans 393 residues: Selenide, water dikinase (393 aa).

Residues Met-1–Asp-21 are disordered. Cys-42 is an active-site residue. ATP-binding positions include Lys-45, Gly-68–Asp-70, Asp-93, Asp-116, and Gly-167–Thr-170. Asp-70 is a Mg(2+) binding site. Asp-116 is a Mg(2+) binding site. Asp-273 provides a ligand contact to Mg(2+).

The protein belongs to the selenophosphate synthase 1 family. Class I subfamily. In terms of assembly, homodimer. Mg(2+) serves as cofactor.

It carries out the reaction hydrogenselenide + ATP + H2O = selenophosphate + AMP + phosphate + 2 H(+). Synthesizes selenophosphate from selenide and ATP. This Trypanosoma brucei brucei (strain 927/4 GUTat10.1) protein is Selenide, water dikinase.